Consider the following 148-residue polypeptide: MTIWVDADACPKMIKDILFRAAIRTNTNLILVANSYLTYPNSPFIRSVLVEKGYDRADHYITSHMKAKDLVITADIPLAAEVIVKQGLAMSPRGELFTANNIKQRLTLRDINEQLRSAGERTGGPSALSAKEKTNFANALDRWLVKSK.

This sequence belongs to the UPF0178 family.

The polypeptide is UPF0178 protein LPC_0108 (Legionella pneumophila (strain Corby)).